The chain runs to 315 residues: Salivary protein SG34 (315 aa).

The signal sequence occupies residues Met1–Ser20. A coiled-coil region spans residues Asn98–Gln161.

Functionally, (Microbial infection) Modulates replication of duck Tembusu virus in salivary glands and virus release into the saliva, probably via the regulation of antimicrobial peptides expression in response to duck Tembusu virus infection. The protein is Salivary protein SG34 of Aedes albopictus (Asian tiger mosquito).